We begin with the raw amino-acid sequence, 126 residues long: uncharacterized protein (126 aa).

The helical transmembrane segment at 48–68 (ILCMFPWQCVVYVFSNFVWLV) threads the bilayer.

It localises to the membrane. This is an uncharacterized protein from Homo sapiens (Human).